Here is a 109-residue protein sequence, read N- to C-terminus: Set1 complex component sdc1 (109 aa).

The tract at residues 49 to 109 (QQKQKEIVNQ…SSNPGKNSAS (61 aa)) is disordered. Polar residues predominate over residues 73–87 (STPTMAEQVQTSFSN). Over residues 88 to 101 (PASTPLTQTSSPSS) the composition is skewed to low complexity.

It belongs to the dpy-30 family. Component of the COMPASS (Set1C) complex composed of ash2, sdc1, set1, shg1, spp1, swd1, swd2 and swd3. Component of the Lid2 complex composed of ash2, jmj3, lid2, sdc1 and snt2.

The protein localises to the nucleus. Functionally, the COMPASS (Set1C) complex specifically mono-, di- and trimethylates histone H3 to form H3K4me1/2/3, which subsequently activates gene expression by regulating transcription elongation and plays a role in telomere length maintenance. The chain is Set1 complex component sdc1 (sdc1) from Schizosaccharomyces pombe (strain 972 / ATCC 24843) (Fission yeast).